The chain runs to 219 residues: Putative germin-like protein 8-1 (219 aa).

Positions 1 to 23 (MASFISFLLLAALIGMASWQAIA) are cleaved as a signal peptide. Cysteines 33 and 48 form a disulfide. 2 N-linked (GlcNAc...) asparagine glycosylation sites follow: N53 and N79. Positions 63–215 (AMLDKPRDTA…AFQVDKKIID (153 aa)) constitute a Cupin type-1 domain. H112, H114, E119, and H160 together coordinate Mn(2+).

The protein belongs to the germin family. As to quaternary structure, oligomer (believed to be a pentamer but probably hexamer).

The protein localises to the secreted. The protein resides in the extracellular space. Its subcellular location is the apoplast. Plays a role in broad-spectrum disease resistance. Probably has no oxalate oxidase activity even if the active site is conserved. The protein is Putative germin-like protein 8-1 of Oryza sativa subsp. japonica (Rice).